Reading from the N-terminus, the 122-residue chain is Large ribosomal subunit protein bL17 (122 aa).

The protein belongs to the bacterial ribosomal protein bL17 family. In terms of assembly, part of the 50S ribosomal subunit. Contacts protein L32.

The sequence is that of Large ribosomal subunit protein bL17 from Nautilia profundicola (strain ATCC BAA-1463 / DSM 18972 / AmH).